The sequence spans 166 residues: MSEQQAFRDAMSRLGAAVNIVTTDGPAGMAGFTASAVCSVTDSPPTLLVCLNRNASVWPVFQANGQLCVNTLAAGHEALSGLFGGKTPMEERFAAARWRRGVTGSPQLDGAVVSFDCRVEQVVPVSTHDVLLCRVLEISRNDDTHGLVWFDRRYHALSRPVCGLAS.

This sequence belongs to the non-flavoprotein flavin reductase family. RutF subfamily.

It carries out the reaction FMNH2 + NAD(+) = FMN + NADH + 2 H(+). Functionally, catalyzes the reduction of FMN to FMNH2 which is used to reduce pyrimidine by RutA via the Rut pathway. The chain is FMN reductase (NADH) RutF from Cronobacter sakazakii (strain ATCC BAA-894) (Enterobacter sakazakii).